The primary structure comprises 235 residues: DNA repair protein RecO (235 aa).

Belongs to the RecO family.

Functionally, involved in DNA repair and RecF pathway recombination. The chain is DNA repair protein RecO from Enterobacter sp. (strain 638).